The chain runs to 208 residues: EF-hand protein 5 variant 1 (208 aa).

The segment at 1 to 34 (MQARGTVKVQGDAKVDGKMSTGQHSHHQHLNSTQ) is disordered. EF-hand domains follow at residues 64 to 98 (MAEGFYVLSGGYKKLFIPSKDVYALMQNVGMHLTE), 99 to 134 (EEFHDALRVIGQSEPQNADELSFSDFLLLMTREVDD), 135 to 170 (TMADELRSAFFHYDKYKTGYVTRKQFTELFATLGER), and 171 to 206 (STPEELEELLAVAEVDETDDKIDYNRFVNELTSRVN). Positions 118, 123, 148, 152, and 154 each coordinate Ca(2+).

In Trypanosoma cruzi, this protein is EF-hand protein 5 variant 1.